We begin with the raw amino-acid sequence, 59 residues long: Mu-conotoxin SrVA (59 aa).

Residues Met-1–Ala-22 form the signal peptide. Positions Gln-23–His-44 are excised as a propeptide. Disulfide bonds link Cys-51-Cys-58 and Cys-52-Cys-59.

The protein belongs to the conotoxin T superfamily. Expressed by the venom duct.

It is found in the secreted. Mu-conotoxins block voltage-gated sodium channels. This peptide inhibits the cardiac sodium channel hNav1.5/SCN5A (33% inhibition at 200 nM, 50% at 400 nM, and 55% at 600 nM). Does not interfere with the voltage-dependence of activation, but affects the voltage-dependence of inactivation of hNav1.5. In vivo, intracranial injection into 9-day-old mice causes transient symptoms, including extension of the body and clockwise and counter-clockwise turns, that last 3 to 4 minutes. Intracranial injection into 16-day-old mice, causes transient symptoms, including agitated breathing and occasional turning followed by scratching and grooming behavior, that last for 15-19 minutes. This Conus spurius (Alphabet cone) protein is Mu-conotoxin SrVA.